The chain runs to 186 residues: Crossover junction endodeoxyribonuclease RuvC (186 aa).

Active-site residues include Asp7, Glu67, and Asp140. 3 residues coordinate Mg(2+): Asp7, Glu67, and Asp140.

Belongs to the RuvC family. In terms of assembly, homodimer which binds Holliday junction (HJ) DNA. The HJ becomes 2-fold symmetrical on binding to RuvC with unstacked arms; it has a different conformation from HJ DNA in complex with RuvA. In the full resolvosome a probable DNA-RuvA(4)-RuvB(12)-RuvC(2) complex forms which resolves the HJ. Requires Mg(2+) as cofactor.

The protein localises to the cytoplasm. The catalysed reaction is Endonucleolytic cleavage at a junction such as a reciprocal single-stranded crossover between two homologous DNA duplexes (Holliday junction).. The RuvA-RuvB-RuvC complex processes Holliday junction (HJ) DNA during genetic recombination and DNA repair. Endonuclease that resolves HJ intermediates. Cleaves cruciform DNA by making single-stranded nicks across the HJ at symmetrical positions within the homologous arms, yielding a 5'-phosphate and a 3'-hydroxyl group; requires a central core of homology in the junction. The consensus cleavage sequence is 5'-(A/T)TT(C/G)-3'. Cleavage occurs on the 3'-side of the TT dinucleotide at the point of strand exchange. HJ branch migration catalyzed by RuvA-RuvB allows RuvC to scan DNA until it finds its consensus sequence, where it cleaves and resolves the cruciform DNA. The polypeptide is Crossover junction endodeoxyribonuclease RuvC (Chloroherpeton thalassium (strain ATCC 35110 / GB-78)).